We begin with the raw amino-acid sequence, 387 residues long: S-adenosylmethionine synthase (387 aa).

H15 provides a ligand contact to ATP. D17 is a binding site for Mg(2+). A K(+)-binding site is contributed by E43. E56 and Q99 together coordinate L-methionine. The tract at residues 99 to 109 (QSPDIALGVNR) is flexible loop. Residues 166–168 (DAK), 232–233 (RF), D241, 247–248 (RK), A264, and K268 contribute to the ATP site. Position 241 (D241) interacts with L-methionine. An L-methionine-binding site is contributed by K272.

The protein belongs to the AdoMet synthase family. As to quaternary structure, homotetramer; dimer of dimers. Mg(2+) serves as cofactor. Requires K(+) as cofactor.

The protein localises to the cytoplasm. The enzyme catalyses L-methionine + ATP + H2O = S-adenosyl-L-methionine + phosphate + diphosphate. Its pathway is amino-acid biosynthesis; S-adenosyl-L-methionine biosynthesis; S-adenosyl-L-methionine from L-methionine: step 1/1. Its function is as follows. Catalyzes the formation of S-adenosylmethionine (AdoMet) from methionine and ATP. The overall synthetic reaction is composed of two sequential steps, AdoMet formation and the subsequent tripolyphosphate hydrolysis which occurs prior to release of AdoMet from the enzyme. In Nitrosomonas eutropha (strain DSM 101675 / C91 / Nm57), this protein is S-adenosylmethionine synthase.